Reading from the N-terminus, the 620-residue chain is Chaperone protein HscA homolog (620 aa).

It belongs to the heat shock protein 70 family.

Functionally, chaperone involved in the maturation of iron-sulfur cluster-containing proteins. Has a low intrinsic ATPase activity which is markedly stimulated by HscB. The protein is Chaperone protein HscA homolog of Shewanella baltica (strain OS195).